The primary structure comprises 650 residues: Aminopeptidase B (650 aa).

An N-acetylalanine modification is found at Ala2. Residue Ser7 is modified to Phosphoserine. 298-302 (GGMEN) is a substrate binding site. Position 325 (His325) interacts with Zn(2+). Glu326 serves as the catalytic Proton acceptor. The Zn(2+) site is built by His329 and Glu348. Lys446 carries the post-translational modification N6-acetyllysine.

Belongs to the peptidase M1 family. Zn(2+) serves as cofactor.

It localises to the secreted. It carries out the reaction Release of N-terminal Arg and Lys from oligopeptides when P1' is not Pro. Also acts on arylamides of Arg and Lys.. Exopeptidase which selectively removes arginine and/or lysine residues from the N-terminus of several peptide substrates including Arg(0)-Leu-enkephalin, Arg(0)-Met-enkephalin and Arg(-1)-Lys(0)-somatostatin-14. Can hydrolyze leukotriene A4 (LTA-4) into leukotriene B4 (LTB-4). In Homo sapiens (Human), this protein is Aminopeptidase B (RNPEP).